Here is a 287-residue protein sequence, read N- to C-terminus: N-methyltransferase verN (287 aa).

It belongs to the methyltransferase superfamily. LaeA methyltransferase family.

The protein operates within mycotoxin biosynthesis. In terms of biological role, N-methyltransferase; part of the gene cluster that mediates the biosynthesis of 11'-deoxyverticillin A, one of the dimeric epipolythiodioxopiperazines (ETPs) from the verticillin family that act as mycotoxins. 11'-deoxyverticillin A is required for normal conidiation. The nonribosomal peptide synthetase verP is speculated to be responsible for condensation of amino acids to form the carbon skeleton of verticillin, whereas the cluster-specific tailoring enzymes are involved in further modifications leading to the production of 11'-deoxyverticillin A. The chain is N-methyltransferase verN from Clonostachys rogersoniana.